The sequence spans 307 residues: Ribonuclease HII (307 aa).

Residues glutamate 44–leucine 235 enclose the RNase H type-2 domain. 3 residues coordinate a divalent metal cation: aspartate 50, glutamate 51, and aspartate 144. A disordered region spans residues alanine 241 to proline 307. Over residues alanine 250–glycine 280 the composition is skewed to low complexity. Basic and acidic residues predominate over residues arginine 287–aspartate 296.

Belongs to the RNase HII family. Mn(2+) is required as a cofactor. Mg(2+) serves as cofactor.

The protein resides in the cytoplasm. It catalyses the reaction Endonucleolytic cleavage to 5'-phosphomonoester.. Its function is as follows. Endonuclease that specifically degrades the RNA of RNA-DNA hybrids. The sequence is that of Ribonuclease HII from Acidothermus cellulolyticus (strain ATCC 43068 / DSM 8971 / 11B).